Reading from the N-terminus, the 467-residue chain is Glutamate--tRNA ligase (467 aa).

Positions 9–19 (PSPTGNLHIGS) match the 'HIGH' region motif. The short motif at 237–241 (KISKR) is the 'KMSKS' region element. Lys240 provides a ligand contact to ATP.

Belongs to the class-I aminoacyl-tRNA synthetase family. Glutamate--tRNA ligase type 1 subfamily. As to quaternary structure, monomer.

The protein localises to the cytoplasm. It carries out the reaction tRNA(Glu) + L-glutamate + ATP = L-glutamyl-tRNA(Glu) + AMP + diphosphate. Catalyzes the attachment of glutamate to tRNA(Glu) in a two-step reaction: glutamate is first activated by ATP to form Glu-AMP and then transferred to the acceptor end of tRNA(Glu). In Buchnera aphidicola subsp. Acyrthosiphon pisum (strain APS) (Acyrthosiphon pisum symbiotic bacterium), this protein is Glutamate--tRNA ligase.